The chain runs to 144 residues: MTIERTFSIVKPDAVKRNLIGAIYRRIEKTGMQIVAAKMLRLTKEQAEGFYAEHEGKEFFDELVAYMMSGPVMVQVLEGENAVVRYRELMGKTNPEEAACGSLRADYAISMRYNSVHGADSPESAAREIAYFFAEDEICPRPAE.

K11, F59, R87, T93, R104, and N114 together coordinate ATP. H117 (pros-phosphohistidine intermediate) is an active-site residue.

The protein belongs to the NDK family. As to quaternary structure, homotetramer. It depends on Mg(2+) as a cofactor.

It localises to the cytoplasm. It carries out the reaction a 2'-deoxyribonucleoside 5'-diphosphate + ATP = a 2'-deoxyribonucleoside 5'-triphosphate + ADP. The catalysed reaction is a ribonucleoside 5'-diphosphate + ATP = a ribonucleoside 5'-triphosphate + ADP. Major role in the synthesis of nucleoside triphosphates other than ATP. The ATP gamma phosphate is transferred to the NDP beta phosphate via a ping-pong mechanism, using a phosphorylated active-site intermediate. In Aliivibrio fischeri (strain ATCC 700601 / ES114) (Vibrio fischeri), this protein is Nucleoside diphosphate kinase.